A 343-amino-acid polypeptide reads, in one-letter code: uncharacterized protein (343 aa).

Disordered stretches follow at residues 1–27 (MIREWENGCPKIGKQRARDSRAQERMT) and 205–247 (SGGL…SKRQ). Over residues 16 to 27 (RARDSRAQERMT) the composition is skewed to basic and acidic residues. Over residues 219-228 (GQDDGNTDDG) the composition is skewed to acidic residues. Residues 229–247 (NDVHQKGRGEVESKTSKRQ) are compositionally biased toward basic and acidic residues.

Dispensable for normal development and fertility. This is an uncharacterized protein from Bos taurus (Bovine).